Reading from the N-terminus, the 773-residue chain is MAEAHQAVAFQFTVTPDGIDLRLSHEALRQIYLSGLHSWKKKFIRFKNGIITGVYPASPSSWLIVVVGVMTTMYAKIDPSLGIIAKINRTLETANCMSSQTKNVVSGVLFGTGLWVALIVTMRYSLKVLLSYHGWMFTEHGKMSRATKIWMGMVKIFSGRKPMLYSFQTSLPRLPVPAVKDTVNRYLQSVRPLMKEEDFKRMTALAQDFAVGLGPRLQWYLKLKSWWATNYVSDWWEEYIYLRGRGPLMVNSNYYAMDLLYILPTHIQAARAGNAIHAILLYRRKLDREEIKPIRLLGSTIPLCSAQWERMFNTSRIPGEETDTIQHMRDSKHIVVYHRGRYFKVWLYHDGRLLKPREMEQQMQRILDNTSEPQPGEARLAALTAGDRVPWARCRQAYFGRGKNKQSLDAVEKAAFFVTLDETEEGYRSEDPDTSMDSYAKSLLHGRCYDRWFDKSFTFVVFKNGKMGLNAEHSWADAPIVAHLWEYVMSIDSLQLGYAEDGHCKGDINPNIPYPTRLQWDIPGECQEVIETSLNTANLLANDVDFHSFPFVAFGKGIIKKCRTSPDAFVQLALQLAHYKDMGKFCLTYEASMTRLFREGRTETVRSCTTESCDFVRAMVDPAQTVEQRLKLFKLASEKHQHMYRLAMTGSGIDRHLFCLYVVSKYLAVESPFLKEVLSEPWRLSTSQTPQQQVELFDLENNPEYVSSGGGFGPVADDGYGVSYILVGENLINFHISSKFSCPETDSHRFGRHLKEAMTDIITLFGLSSNSKK.

An N-acetylalanine modification is found at Ala2. The Cytoplasmic portion of the chain corresponds to 2–47 (AEAHQAVAFQFTVTPDGIDLRLSHEALRQIYLSGLHSWKKKFIRFK). A helical transmembrane segment spans residues 48 to 73 (NGIITGVYPASPSSWLIVVVGVMTTM). The Mitochondrial intermembrane segment spans residues 74 to 102 (YAKIDPSLGIIAKINRTLETANCMSSQTK). A helical transmembrane segment spans residues 103–122 (NVVSGVLFGTGLWVALIVTM). Residues 123 to 773 (RYSLKVLLSY…LFGLSSNSKK (651 aa)) are Cytoplasmic-facing. A 3'-nitrotyrosine modification is found at Tyr282. The Proton acceptor role is filled by His473. CoA is bound at residue 555–567 (GKGIIKKCRTSPD). At Thr588 the chain carries Phosphothreonine. 3'-nitrotyrosine is present on Tyr589. The (R)-carnitine site is built by Tyr589 and Thr602. Thr604 bears the Phosphothreonine mark. A phosphoserine mark is found at Ser741 and Ser747.

The protein belongs to the carnitine/choline acetyltransferase family. Homohexamer and homotrimer. Identified in a complex that contains at least CPT1A, ACSL1 and VDAC1. Also identified in complexes with ACSL1 and VDAC2 and VDAC3. Interacts with ZDHHC4. Strong expression in kidney and heart, and lower in liver and skeletal muscle.

It is found in the mitochondrion outer membrane. The enzyme catalyses (R)-carnitine + hexadecanoyl-CoA = O-hexadecanoyl-(R)-carnitine + CoA. It catalyses the reaction succinyl-CoA + L-lysyl-[protein] = N(6)-succinyl-L-lysyl-[protein] + CoA + H(+). It functions in the pathway lipid metabolism; fatty acid beta-oxidation. Its activity is regulated as follows. Inhibited by malonyl-CoA. Catalyzes the transfer of the acyl group of long-chain fatty acid-CoA conjugates onto carnitine, an essential step for the mitochondrial uptake of long-chain fatty acids and their subsequent beta-oxidation in the mitochondrion. Also possesses a lysine succinyltransferase activity that can regulate enzymatic activity of substrate proteins such as ENO1 and metabolism independent of its classical carnitine O-palmitoyltransferase activity. Plays an important role in hepatic triglyceride metabolism. Also plays a role in inducible regulatory T-cell (iTreg) differentiation once activated by butyryl-CoA that antagonizes malonyl-CoA-mediated CPT1A repression. Sustains the IFN-I response by recruiting ZDHCC4 to palmitoylate MAVS at the mitochondria leading to MAVS stabilization and activation. Promotes ROS-induced oxidative stress in liver injury via modulation of NFE2L2 and NLRP3-mediated signaling pathways. In Homo sapiens (Human), this protein is Carnitine O-palmitoyltransferase 1, liver isoform.